Reading from the N-terminus, the 129-residue chain is Small ribosomal subunit protein uS11 (129 aa).

Belongs to the universal ribosomal protein uS11 family. Part of the 30S ribosomal subunit. Interacts with proteins S7 and S18. Binds to IF-3.

Its function is as follows. Located on the platform of the 30S subunit, it bridges several disparate RNA helices of the 16S rRNA. Forms part of the Shine-Dalgarno cleft in the 70S ribosome. This Bartonella bacilliformis (strain ATCC 35685 / KC583 / Herrer 020/F12,63) protein is Small ribosomal subunit protein uS11.